A 412-amino-acid chain; its full sequence is [Pyruvate dehydrogenase (acetyl-transferring)] kinase isozyme 4, mitochondrial (412 aa).

Positions 138 to 368 constitute a Histidine kinase domain; it reads ILEYKDTCTV…DAIIYLKALS (231 aa). ATP is bound by residues 254 to 261, aspartate 293, 312 to 313, and 329 to 334; these read ELFKNAMR, ST, and GFGYGL.

It belongs to the PDK/BCKDK protein kinase family. In terms of assembly, homodimer. Interacts with the pyruvate dehydrogenase complex subunit DLAT, and is part of the multimeric pyruvate dehydrogenase complex that contains multiple copies of pyruvate dehydrogenase (E1), dihydrolipoamide acetyltransferase (DLAT, E2) and lipoamide dehydrogenase (DLD, E3).

It localises to the mitochondrion matrix. The catalysed reaction is L-seryl-[pyruvate dehydrogenase E1 alpha subunit] + ATP = O-phospho-L-seryl-[pyruvate dehydrogenase E1 alpha subunit] + ADP + H(+). Functionally, kinase that plays a key role in regulation of glucose and fatty acid metabolism and homeostasis via phosphorylation of the pyruvate dehydrogenase subunits PDHA1 and PDHA2. This inhibits pyruvate dehydrogenase activity, and thereby regulates metabolite flux through the tricarboxylic acid cycle, down-regulates aerobic respiration and inhibits the formation of acetyl-coenzyme A from pyruvate. Inhibition of pyruvate dehydrogenase decreases glucose utilization and increases fat metabolism in response to prolonged fasting and starvation. Plays an important role in maintaining normal blood glucose levels under starvation, and is involved in the insulin signaling cascade. Via its regulation of pyruvate dehydrogenase activity, plays an important role in maintaining normal blood pH and in preventing the accumulation of ketone bodies under starvation. In the fed state, mediates cellular responses to glucose levels and to a high-fat diet. Regulates both fatty acid oxidation and de novo fatty acid biosynthesis. Plays a role in the generation of reactive oxygen species. Protects detached epithelial cells against anoikis. Plays a role in cell proliferation via its role in regulating carbohydrate and fatty acid metabolism. This Mus musculus (Mouse) protein is [Pyruvate dehydrogenase (acetyl-transferring)] kinase isozyme 4, mitochondrial (Pdk4).